Reading from the N-terminus, the 394-residue chain is DNA replication and repair protein RecF (394 aa).

30 to 37 (GRNGFGKT) serves as a coordination point for ATP.

This sequence belongs to the RecF family.

Its subcellular location is the cytoplasm. Functionally, the RecF protein is involved in DNA metabolism; it is required for DNA replication and normal SOS inducibility. RecF binds preferentially to single-stranded, linear DNA. It also seems to bind ATP. This is DNA replication and repair protein RecF from Corynebacterium glutamicum (strain ATCC 13032 / DSM 20300 / JCM 1318 / BCRC 11384 / CCUG 27702 / LMG 3730 / NBRC 12168 / NCIMB 10025 / NRRL B-2784 / 534).